The chain runs to 3623 residues: Cubilin (3623 aa).

Positions 1–20 (MSSQFLWGFVTLLMIAELDG) are cleaved as a signal peptide. Residues 21–32 (KTGKPEQRGQKR) constitute a propeptide, removed in mature form. The interval 39-46 (PRMTTEEG) is interaction with AMN. The N-linked (GlcNAc...) asparagine glycan is linked to N95. One can recognise an EGF-like 1 domain in the interval 129–165 (ERKVCSSNPCLNGGTCVNLHDSFVCICPSQWKGLFCS). 9 disulfides stabilise this stretch: C133–C144, C138–C153, C155–C164, C171–C187, C181–C196, C198–C207, C264–C277, C271–C286, and C289–C300. The region spanning 167-208 (DVNECVVYSGTPFGCQSGSTCVNTVGSFRCDCTPDTYGPQCA) is the EGF-like 2; calcium-binding domain. The region spanning 260-301 (DKDECSLQPSPCSEHAQCFNTQGSFYCGACPKGWQGNGYECQ) is the EGF-like 3; calcium-binding domain. One can recognise an EGF-like 4; calcium-binding domain in the interval 302-345 (DINECEINNGGCSQAPLVPCLNTPGSFSCGNCPAGFSGDGRVCT). 2 consecutive EGF-like domains span residues 346-385 (PVDI…YTGN) and 395-430 (LSNI…QNCT). Disulfide bonds link C350–C363, C357–C376, C399–C409, C404–C418, C420–C429, C436–C447, C441–C456, C458–C467, C474–C500, C527–C549, C590–C616, C643–C665, and C708–C734. N428 is a glycosylation site (N-linked (GlcNAc...) asparagine). Residues 432-468 (NINDCSSNPCLNGGTCIDGINGFTCDCTSSWTGYYCQ) form the EGF-like 7; calcium-binding domain. 27 CUB domains span residues 474–586 (CGGI…WEAK), 590–702 (CGGI…YLTT), 708–816 (CGGN…YQVA), 817–928 (CGGM…FSSD), 932–1042 (CGEV…YEAI), 1048–1161 (CLYD…WDGS), 1165–1277 (CGGN…FRQR), 1278–1389 (CDNV…WFTH), 1391–1506 (CGGE…WRAV), 1510–1619 (CGGI…FREE), 1620–1734 (CGGR…YSAS), 1738–1850 (CGGS…FKNI), 1852–1963 (GNNN…WFAV), 1978–2091 (CGGF…FHKS), 2092–2213 (CGGY…YEAK), 2217–2334 (CGGT…YSIA), 2336–2448 (CGGT…FKSS), 2452–2565 (CGGD…YTST), 2570–2687 (CGGF…YSFT), 2689–2801 (CGGI…WTTN), 2805–2919 (CGGT…FISR), 2920–3035 (CGRT…YRAI), 3037–3150 (CGGI…FRET), 3157–3274 (CGGY…YTFV), 3278–3393 (CGGT…YQIA), 3395–3507 (CNRE…WTSS), and 3511–3623 (CGGT…MWSS). N-linked (GlcNAc...) asparagine glycosylation occurs at N491. N711 and N749 each carry an N-linked (GlcNAc...) asparagine glycan. Residues C761 and C779 are joined by a disulfide bond. N-linked (GlcNAc...) asparagine glycosylation occurs at N781. C817 and C842 are joined by a disulfide. The N-linked (GlcNAc...) asparagine glycan is linked to N857. 2 disulfide bridges follow: C869–C891 and C932–C958. N957 carries N-linked (GlcNAc...) asparagine glycosylation. A Ca(2+)-binding site is contributed by E980. N-linked (GlcNAc...) asparagine glycosylation occurs at N984. Cysteines 985 and 1005 form a disulfide. The Ca(2+) site is built by D988, D1027, and L1030. A disulfide bridge links C1048 with C1074. Residues E1096, D1105, and D1146 each contribute to the Ca(2+) site. A disulfide bridge links C1165 with C1191. N1168 carries an N-linked (GlcNAc...) asparagine glycan. E1213, D1221, D1262, G1264, and Q1265 together coordinate Ca(2+). A disulfide bridge links C1218 with C1240. C1278 and C1306 form a disulfide bridge. N-linked (GlcNAc...) asparagine glycosylation is found at N1285, N1307, and N1319. E1328 provides a ligand contact to Ca(2+). N1332 carries an N-linked (GlcNAc...) asparagine glycan. A disulfide bridge links C1333 with C1351. Ca(2+) is bound by residues D1336, D1373, and I1375. Intrachain disulfides connect C1391–C1417 and C1444–C1466. N-linked (GlcNAc...) asparagine glycosylation occurs at N1500. C1510 and C1536 are oxidised to a cystine. Residues N1551, N1646, and N1671 are each glycosylated (N-linked (GlcNAc...) asparagine). An intrachain disulfide couples C1620 to C1647. 3 disulfide bridges follow: C1675–C1697, C1738–C1764, and C1791–C1812. N1802 and N1819 each carry an N-linked (GlcNAc...) asparagine glycan. 3 cysteine pairs are disulfide-bonded: C1905–C1927, C1978–C2006, and C2032–C2054. N-linked (GlcNAc...) asparagine glycosylation is found at N2085 and N2117. Intrachain disulfides connect C2092–C2118 and C2217–C2247. N2274 carries N-linked (GlcNAc...) asparagine glycosylation. 5 cysteine pairs are disulfide-bonded: C2275–C2297, C2336–C2363, C2390–C2411, C2452–C2478, and C2505–C2527. A glycan (N-linked (GlcNAc...) asparagine) is linked at N2400. N-linked (GlcNAc...) asparagine glycosylation is found at N2531, N2581, and N2610. A disulfide bridge links C2570 with C2599. Cystine bridges form between C2628-C2649, C2689-C2715, C2742-C2764, C2805-C2831, C2860-C2883, C2920-C2946, and C2977-C2999. N-linked (GlcNAc...) asparagine glycosylation is found at N2813, N2875, N2945, and N2989. T3008 bears the Phosphothreonine mark. 2 disulfide bridges follow: C3037/C3064 and C3091/C3113. N3042, N3106, N3125, and N3165 each carry an N-linked (GlcNAc...) asparagine glycan. Intrachain disulfides connect C3157–C3185 and C3215–C3237. Residues N3268, N3283, and N3290 are each glycosylated (N-linked (GlcNAc...) asparagine). Disulfide bonds link C3278/C3306 and C3332/C3354. N-linked (GlcNAc...) asparagine glycans are attached at residues N3357, N3400, and N3430. C3395 and C3421 are joined by a disulfide. 3 disulfides stabilise this stretch: C3448-C3470, C3511-C3537, and C3564-C3586. N3533 is a glycosylation site (N-linked (GlcNAc...) asparagine).

Interacts with AMN. Component of the cubam complex composed of one CUBN trimer and one AMN chain. The cubam complex can dimerize. Interacts with LRP2 in a dual-receptor complex in a calcium-dependent manner. Found in a complex with PID1/PCLI1, LRP1 and CUBNI. Interacts with LRP1 and PID1/PCLI1. Post-translationally, the precursor is cleaved by a trans-Golgi proteinase furin, removing a propeptide. N-glycosylated. Expressed to intestinal, renal and yalk sac apical membranes. In kidney, expressed in the proximal tubule.

Its subcellular location is the cell membrane. It localises to the endosome membrane. The protein localises to the lysosome membrane. In terms of biological role, endocytic receptor which plays a role in lipoprotein, vitamin and iron metabolism by facilitating their uptake. Acts together with LRP2 to mediate endocytosis of high-density lipoproteins, GC, hemoglobin, ALB, TF and SCGB1A1. Acts together with AMN to mediate endocytosis of the CBLIF-cobalamin complex. Binds to ALB, MB, Kappa and lambda-light chains, TF, hemoglobin, GC, SCGB1A1, APOA1, high density lipoprotein, and the CBLIF-cobalamin complex. Ligand binding requires calcium. Serves as important transporter in several absorptive epithelia, including intestine, renal proximal tubules and embryonic yolk sac. May play an important role in the development of the peri-implantation embryo through internalization of APOA1 and cholesterol. Binds to LGALS3 at the maternal-fetal interface. This is Cubilin (Cubn) from Rattus norvegicus (Rat).